A 307-amino-acid polypeptide reads, in one-letter code: Oxygen-dependent coproporphyrinogen-III oxidase (307 aa).

S99 is a substrate binding site. A divalent metal cation-binding residues include H103 and H113. The Proton donor role is filled by H113. 115 to 117 serves as a coordination point for substrate; the sequence is NVR. H152 and H182 together coordinate a divalent metal cation. Residues 247 to 282 form an important for dimerization region; sequence YVEFNLVFDRGTLFGLQSGGRTESILMSMPPVVNWR. 265–267 serves as a coordination point for substrate; it reads GGR.

The protein belongs to the aerobic coproporphyrinogen-III oxidase family. As to quaternary structure, homodimer. A divalent metal cation serves as cofactor.

It localises to the cytoplasm. The enzyme catalyses coproporphyrinogen III + O2 + 2 H(+) = protoporphyrinogen IX + 2 CO2 + 2 H2O. It functions in the pathway porphyrin-containing compound metabolism; protoporphyrin-IX biosynthesis; protoporphyrinogen-IX from coproporphyrinogen-III (O2 route): step 1/1. Functionally, involved in the heme biosynthesis. Catalyzes the aerobic oxidative decarboxylation of propionate groups of rings A and B of coproporphyrinogen-III to yield the vinyl groups in protoporphyrinogen-IX. This Paraburkholderia xenovorans (strain LB400) protein is Oxygen-dependent coproporphyrinogen-III oxidase.